Here is a 154-residue protein sequence, read N- to C-terminus: Small ribosomal subunit protein uS9 (154 aa).

A disordered region spans residues 135–154; that stretch reads KESKKYGLKKARKAPQYSKR. Positions 140-154 are enriched in basic residues; sequence YGLKKARKAPQYSKR.

Belongs to the universal ribosomal protein uS9 family.

The chain is Small ribosomal subunit protein uS9 from Salinispora arenicola (strain CNS-205).